A 555-amino-acid chain; its full sequence is Ribonuclease J2 (555 aa).

Residues His-74, His-76, His-142, and Asp-164 each coordinate Zn(2+). 364-368 is a binding site for substrate; sequence HVSGH.

It belongs to the metallo-beta-lactamase superfamily. RNA-metabolizing metallo-beta-lactamase-like family. Bacterial RNase J subfamily. In terms of assembly, unclear whether it forms homodimers or belongs to a larger complex. According to probably does not form homodimers, while shows homodimer formation. Both reports show RNase J1 and J2 interaction, probably as a heterotetramer shows it is a component of a possible RNA degradosome complex composed of rny, rnjA, rnjB, pnp, pfkA and eno, while finds no evidence of an RNA degradosome complex. It depends on Zn(2+) as a cofactor.

Its subcellular location is the cytoplasm. In terms of biological role, endonucleolytically cleaves the 5'-leader sequence of certain mRNAs. Endonuclease digestion by the RNase J1/J2 complex occurs at a different site and in some cases more efficiently than J1 or J2 alone. The exonuclease activity of the J1/J2 complex is highly processive on substrates longer than 5 nucleotides, on shorter substrates is distributive. Plays a role in mRNA maturation and stability. Appears to have a limited effect on 16S rRNA maturation, despite its similarity to RNase J1. This subunit alone has very poor 5'-3' exonuclease activity. The polypeptide is Ribonuclease J2 (Bacillus subtilis (strain 168)).